Consider the following 1487-residue polypeptide: Probable serine/threonine-protein kinase roco11 (1487 aa).

Positions threonine 108–glutamine 134 are disordered. The segment covering histidine 116–glutamine 125 has biased composition (basic residues). LRR repeat units lie at residues asparagine 295 to leucine 316, histidine 318 to threonine 340, and asparagine 341 to glutamine 362. Positions lysine 379–serine 564 constitute a Roc domain. The small GTPase-like stretch occupies residues lysine 379–serine 564. GTP is bound by residues glycine 392–serine 399, aspartate 448–glutamine 452, and threonine 507–aspartate 510. The COR domain occupies valine 678–leucine 872. A disordered region spans residues serine 891–isoleucine 1007. Positions serine 897 to threonine 931 are enriched in low complexity. Polar residues predominate over residues valine 932–threonine 950. Positions asparagine 951–isoleucine 1007 are enriched in low complexity. The Protein kinase domain occupies valine 1185–tyrosine 1452. Residues isoleucine 1191–valine 1199 and lysine 1216 each bind ATP. The active-site Proton acceptor is the aspartate 1313. The disordered stretch occupies residues lysine 1464–lysine 1487.

The protein belongs to the protein kinase superfamily. TKL Ser/Thr protein kinase family. ROCO subfamily.

The enzyme catalyses L-seryl-[protein] + ATP = O-phospho-L-seryl-[protein] + ADP + H(+). The catalysed reaction is L-threonyl-[protein] + ATP = O-phospho-L-threonyl-[protein] + ADP + H(+). This is Probable serine/threonine-protein kinase roco11 (roco11) from Dictyostelium discoideum (Social amoeba).